Here is a 310-residue protein sequence, read N- to C-terminus: Homoserine kinase (310 aa).

An ATP-binding site is contributed by 91-101 (PIGSGLGSSAC).

The protein belongs to the GHMP kinase family. Homoserine kinase subfamily.

It is found in the cytoplasm. It catalyses the reaction L-homoserine + ATP = O-phospho-L-homoserine + ADP + H(+). Its pathway is amino-acid biosynthesis; L-threonine biosynthesis; L-threonine from L-aspartate: step 4/5. Functionally, catalyzes the ATP-dependent phosphorylation of L-homoserine to L-homoserine phosphate. The sequence is that of Homoserine kinase from Shigella flexneri serotype 5b (strain 8401).